The following is a 215-amino-acid chain: Eukaryotic translation initiation factor 4E-1 (215 aa).

Residues 1–32 (MAEDTETRPASAGAEEREEGEIADDGDGSSAA) are disordered. The span at 16 to 27 (EREEGEIADDGD) shows a compositional bias: acidic residues. 2 EIF4G-binding regions span residues 40 to 43 (HPLE) and 50 to 86 (FDNP…NNIH). MRNA contacts are provided by residues 58–63 (RQVAWG), Lys-90, and 108–109 (WE). Cys-113 and Cys-151 are joined by a disulfide. Residues 134-143 (HTLLAMIGEQ) are EIF4G-binding. MRNA-binding positions include 158-163 (RQKQER) and 203-207 (KRSDK).

It belongs to the eukaryotic initiation factor 4E family. In terms of assembly, EIF4F is a multi-subunit complex, the composition of which varies with external and internal environmental conditions. It is composed of at least EIF4A, EIF4E and EIF4G. EIF4E is also known to interact with other partners. In higher plants two isoforms of EIF4F have been identified, named isoform EIF4F and isoform EIF(iso)4F. Isoform EIF4F has subunits p220 and p26, whereas isoform EIF(iso)4F has subunits p82 and p28. Post-translationally, according to the redox status, the Cys-113-Cys-151 disulfide bridge may have a role in regulating protein function by affecting its ability to bind capped mRNA.

Its subcellular location is the nucleus. It is found in the cytoplasm. In terms of biological role, component of the protein complex eIF4F, which is involved in the recognition of the mRNA cap, ATP-dependent unwinding of 5'-terminal secondary structure and recruitment of mRNA to the ribosome. Recognizes and binds the 7-methylguanosine-containing mRNA cap during an early step in the initiation of protein synthesis and facilitates ribosome binding by inducing the unwinding of the mRNAs secondary structures. In Triticum aestivum (Wheat), this protein is Eukaryotic translation initiation factor 4E-1.